Consider the following 208-residue polypeptide: RNA-binding protein KhpB (208 aa).

The jag_N domain stretch occupies residues 5–55 (TAAGRNVDEAVQSGLQELGLTKDKVEITVIEEGNKGFLGIFGKKPAIVKLV). One can recognise a KH domain in the interval 58–135 (IDPIQQAKLY…GQYKNVTVDA (78 aa)). The 69-residue stretch at 140-208 (LKRKETLSQL…NRHLVISHKR (69 aa)) folds into the R3H domain.

The protein belongs to the KhpB RNA-binding protein family. As to quaternary structure, forms a complex with KhpA.

Its subcellular location is the cytoplasm. In terms of biological role, a probable RNA chaperone. Forms a complex with KhpA which binds to cellular RNA and controls its expression. Plays a role in peptidoglycan (PG) homeostasis and cell length regulation. The chain is RNA-binding protein KhpB from Bacillus subtilis (strain 168).